The primary structure comprises 350 residues: Fe(3+) ions import ATP-binding protein FbpC (350 aa).

Residues 4–236 (LDIINLSKSF…PNDEQTAHFL (233 aa)) form the ABC transporter domain. 36–43 (GPSGSGKT) serves as a coordination point for ATP.

It belongs to the ABC transporter superfamily. Fe(3+) ion importer (TC 3.A.1.10) family. The complex is composed of two ATP-binding proteins (FbpC), two transmembrane proteins (FbpB) and a solute-binding protein (FbpA).

It localises to the cell inner membrane. The enzyme catalyses Fe(3+)(out) + ATP + H2O = Fe(3+)(in) + ADP + phosphate + H(+). Functionally, part of the ABC transporter complex FbpABC involved in Fe(3+) ions import. Responsible for energy coupling to the transport system. This is Fe(3+) ions import ATP-binding protein FbpC from Pseudomonas fluorescens (strain Pf0-1).